A 353-amino-acid chain; its full sequence is Fe(3+) ions import ATP-binding protein FbpC (353 aa).

The ABC transporter domain occupies 9 to 239 (VTFENVTKKF…PASAFIADFM (231 aa)). Residue 41–48 (GPSGCGKT) coordinates ATP.

The protein belongs to the ABC transporter superfamily. Fe(3+) ion importer (TC 3.A.1.10) family. As to quaternary structure, the complex is composed of two ATP-binding proteins (FbpC), two transmembrane proteins (FbpB) and a solute-binding protein (FbpA).

It localises to the cell inner membrane. It catalyses the reaction Fe(3+)(out) + ATP + H2O = Fe(3+)(in) + ADP + phosphate + H(+). Functionally, part of the ABC transporter complex FbpABC involved in Fe(3+) ions import. Responsible for energy coupling to the transport system. The chain is Fe(3+) ions import ATP-binding protein FbpC from Brucella abortus (strain 2308).